A 404-amino-acid polypeptide reads, in one-letter code: MSLIKDSSIYLIGELSAKCVPFLLLPYLSRKLGVEGFGELSYYQTFLPLFVIFIGLSQDGAVARYFYVYGKRSLNLVVKTGYAYTLSIGGLGLLFCWLMQSEIMFYLVLSAIFQVFLSVQLSIRQCQKQAIPYTFIQVSSTITNAALTILMLEFYQTDLVEKRILAILISNVFVALLSYLIYRKRVNNKKFYFLQYKTAFFYIMSFGFLMIFHHGSFFIRQLDRIFIFHRFSEAELGLYAMGAQIAFILSVFILAINKALVPYLFEKLKQGSVKLKDLHRWSLLSLLIVPIPSLVTLIVPEQWLLFFLGKHFIGVKYYIIVFLLSTSLTIPYLFLVNYLFYHGKTKEISFCSVLSTMIYLGALGGLIFTDVVYIPYASVLGALGILPVLYKITKRVEENEYATH.

The next 11 helical transmembrane spans lie at 9–29 (IYLI…PYLS), 36–56 (GFGE…FIGL), 76–96 (LVVK…LLFC), 103–123 (IMFY…QLSI), 135–155 (FIQV…LEFY), 162–182 (KRIL…YLIY), 199–219 (AFFY…SFFI), 236–256 (LGLY…ILAI), 288–308 (IVPI…LFFL), 319–339 (IIVF…VNYL), and 366–386 (LIFT…LGIL).

It belongs to the polysaccharide synthase family. HI_0867/HI_1700 subfamily.

The protein localises to the cell membrane. This is an uncharacterized protein from Haemophilus influenzae (strain ATCC 51907 / DSM 11121 / KW20 / Rd).